The sequence spans 257 residues: NAD-capped RNA hydrolase NudC (257 aa).

The substrate site is built by Lys25 and Arg69. Zn(2+) contacts are provided by Cys98 and Cys101. Residue Glu111 participates in substrate binding. Zn(2+) is bound by residues Cys116 and Cys119. Tyr124 contributes to the substrate binding site. The Nudix hydrolase domain occupies 125–248 (PQIAPCIIVA…TVARRLIEDT (124 aa)). A divalent metal cation-binding residues include Ala158, Glu174, and Glu178. Positions 159-180 (GFVEVGETLEQAVAREVMEESG) match the Nudix box motif. Substrate is bound at residue 192–199 (QPWPFPQS). Glu219 is an a divalent metal cation binding site. Residue Ala241 participates in substrate binding.

This sequence belongs to the Nudix hydrolase family. NudC subfamily. In terms of assembly, homodimer. Requires Mg(2+) as cofactor. Mn(2+) is required as a cofactor. It depends on Zn(2+) as a cofactor.

It carries out the reaction a 5'-end NAD(+)-phospho-ribonucleoside in mRNA + H2O = a 5'-end phospho-adenosine-phospho-ribonucleoside in mRNA + beta-nicotinamide D-ribonucleotide + 2 H(+). The catalysed reaction is NAD(+) + H2O = beta-nicotinamide D-ribonucleotide + AMP + 2 H(+). The enzyme catalyses NADH + H2O = reduced beta-nicotinamide D-ribonucleotide + AMP + 2 H(+). MRNA decapping enzyme that specifically removes the nicotinamide adenine dinucleotide (NAD) cap from a subset of mRNAs by hydrolyzing the diphosphate linkage to produce nicotinamide mononucleotide (NMN) and 5' monophosphate mRNA. The NAD-cap is present at the 5'-end of some mRNAs and stabilizes RNA against 5'-processing. Has preference for mRNAs with a 5'-end purine. Catalyzes the hydrolysis of a broad range of dinucleotide pyrophosphates. The polypeptide is NAD-capped RNA hydrolase NudC (Escherichia coli O7:K1 (strain IAI39 / ExPEC)).